Consider the following 367-residue polypeptide: Aminomethyltransferase (367 aa).

This sequence belongs to the GcvT family. As to quaternary structure, the glycine cleavage system is composed of four proteins: P, T, L and H.

It carries out the reaction N(6)-[(R)-S(8)-aminomethyldihydrolipoyl]-L-lysyl-[protein] + (6S)-5,6,7,8-tetrahydrofolate = N(6)-[(R)-dihydrolipoyl]-L-lysyl-[protein] + (6R)-5,10-methylene-5,6,7,8-tetrahydrofolate + NH4(+). Its function is as follows. The glycine cleavage system catalyzes the degradation of glycine. The chain is Aminomethyltransferase from Lysinibacillus sphaericus (strain C3-41).